We begin with the raw amino-acid sequence, 116 residues long: MASLLDGVNAATLRSDVPAFRPGDTVNVHVRVIEGNRSRIQQFKGVVIRRQGSGVSETFTVRKVSFSVGVERTFPVHSPIFEKIELVTRGDVRRAKLYFLRELRGKAAKIKEKRDN.

The protein belongs to the bacterial ribosomal protein bL19 family.

In terms of biological role, this protein is located at the 30S-50S ribosomal subunit interface and may play a role in the structure and function of the aminoacyl-tRNA binding site. The protein is Large ribosomal subunit protein bL19 of Streptomyces griseus subsp. griseus (strain JCM 4626 / CBS 651.72 / NBRC 13350 / KCC S-0626 / ISP 5235).